Consider the following 228-residue polypeptide: uncharacterized protein (228 aa).

21 to 28 (GMIALGKT) is an ATP binding site.

This is an uncharacterized protein from Mycoplasma genitalium (strain ATCC 33530 / DSM 19775 / NCTC 10195 / G37) (Mycoplasmoides genitalium).